Consider the following 262-residue polypeptide: Calbindin (262 aa).

The residue at position 2 (Thr-2) is an N-acetylthreonine. 5 consecutive EF-hand domains span residues 12–47 (ISAA…LQQA), 54–89 (DLTP…EENF), 99–134 (KSSE…LLQK), 143–178 (KLTE…QENF), and 187–222 (MCAK…LCEK). Ca(2+)-binding residues include Asp-25, Asp-27, Asn-29, Tyr-31, and Glu-36. Ca(2+)-binding residues include Asp-112, Asp-114, Ser-116, Glu-123, Asp-156, Asn-158, Asp-160, Lys-162, Glu-167, Asp-200, Asp-202, Asn-204, Tyr-206, and Glu-211.

Belongs to the calbindin family. In terms of tissue distribution, highly abundant in supporting cells. Also present in hair cells.

Functionally, buffers cytosolic calcium. May stimulate a membrane Ca(2+)-ATPase and a 3',5'-cyclic nucleotide phosphodiesterase. The protein is Calbindin (CALB1) of Gallus gallus (Chicken).